A 207-amino-acid polypeptide reads, in one-letter code: Large ribosomal subunit protein uL4 (207 aa).

The protein belongs to the universal ribosomal protein uL4 family. Part of the 50S ribosomal subunit.

One of the primary rRNA binding proteins, this protein initially binds near the 5'-end of the 23S rRNA. It is important during the early stages of 50S assembly. It makes multiple contacts with different domains of the 23S rRNA in the assembled 50S subunit and ribosome. In terms of biological role, forms part of the polypeptide exit tunnel. This chain is Large ribosomal subunit protein uL4, found in Geobacter metallireducens (strain ATCC 53774 / DSM 7210 / GS-15).